A 210-amino-acid chain; its full sequence is Small ribosomal subunit protein uS3 (210 aa).

Residues 17–86 form the KH type-2 domain; that stretch reads IDEFLEKELR…NPQIEVEEIK (70 aa).

This sequence belongs to the universal ribosomal protein uS3 family. As to quaternary structure, part of the 30S ribosomal subunit.

Functionally, binds the lower part of the 30S subunit head. This chain is Small ribosomal subunit protein uS3, found in Pyrococcus furiosus (strain ATCC 43587 / DSM 3638 / JCM 8422 / Vc1).